Here is a 177-residue protein sequence, read N- to C-terminus: Peptidyl-tRNA hydrolase (177 aa).

Position 12 (tyrosine 12) interacts with tRNA. Catalysis depends on histidine 17, which acts as the Proton acceptor. Residues phenylalanine 63, asparagine 65, and asparagine 111 each coordinate tRNA.

This sequence belongs to the PTH family. As to quaternary structure, monomer.

Its subcellular location is the cytoplasm. The catalysed reaction is an N-acyl-L-alpha-aminoacyl-tRNA + H2O = an N-acyl-L-amino acid + a tRNA + H(+). In terms of biological role, hydrolyzes ribosome-free peptidyl-tRNAs (with 1 or more amino acids incorporated), which drop off the ribosome during protein synthesis, or as a result of ribosome stalling. Its function is as follows. Catalyzes the release of premature peptidyl moieties from peptidyl-tRNA molecules trapped in stalled 50S ribosomal subunits, and thus maintains levels of free tRNAs and 50S ribosomes. The polypeptide is Peptidyl-tRNA hydrolase (Buchnera aphidicola subsp. Acyrthosiphon pisum (strain 5A)).